The following is a 79-amino-acid chain: Scutelatoxin (79 aa).

The signal sequence occupies residues 1–21; sequence MKTLLLTLVVMTIMCLDLGYT. Disulfide bonds link C24–C41, C34–C59, C63–C71, and C72–C77.

Belongs to the three-finger toxin family. Short-chain subfamily. As to expression, expressed by the venom gland.

The protein resides in the secreted. The polypeptide is Scutelatoxin (Oxyuranus scutellatus scutellatus (Australian taipan)).